Consider the following 459-residue polypeptide: RuvB-like helicase 1 (459 aa).

Residue 75–82 (GGPSTGKT) coordinates ATP.

Belongs to the RuvB family. May form heterododecamers with RVB2. Component of the SWR1 chromatin remodeling complex, the INO80 chromatin remodeling complex, and of the R2TP complex.

The protein localises to the nucleus. The enzyme catalyses ATP + H2O = ADP + phosphate + H(+). In terms of biological role, DNA helicase which participates in several chromatin remodeling complexes, including the SWR1 and the INO80 complexes. The SWR1 complex mediates the ATP-dependent exchange of histone H2A for the H2A variant HZT1 leading to transcriptional regulation of selected genes by chromatin remodeling. The INO80 complex remodels chromatin by shifting nucleosomes and is involved in DNA repair. Also involved in pre-rRNA processing. This Eremothecium gossypii (strain ATCC 10895 / CBS 109.51 / FGSC 9923 / NRRL Y-1056) (Yeast) protein is RuvB-like helicase 1 (RVB1).